Here is an 803-residue protein sequence, read N- to C-terminus: Nucleoporin nup82 (803 aa).

As to quaternary structure, component of the nuclear pore complex (NPC). NPC constitutes the exclusive means of nucleocytoplasmic transport. NPCs allow the passive diffusion of ions and small molecules and the active, nuclear transport receptor-mediated bidirectional transport of macromolecules such as proteins, RNAs, ribonucleoparticles (RNPs), and ribosomal subunits across the nuclear envelope.

It localises to the nucleus. Its subcellular location is the nuclear pore complex. It is found in the nucleus membrane. Its function is as follows. Functions as a component of the nuclear pore complex (NPC). NPC components, collectively referred to as nucleoporins (NUPs), can play the role of both NPC structural components and of docking or interaction partners for transiently associated nuclear transport factors. The polypeptide is Nucleoporin nup82 (Schizosaccharomyces pombe (strain 972 / ATCC 24843) (Fission yeast)).